Consider the following 314-residue polypeptide: Aspartate carbamoyltransferase catalytic subunit (314 aa).

Residues R64 and T65 each coordinate carbamoyl phosphate. K92 is a binding site for L-aspartate. Positions 114, 142, and 145 each coordinate carbamoyl phosphate. The L-aspartate site is built by R175 and R230. 2 residues coordinate carbamoyl phosphate: G271 and P272.

Belongs to the aspartate/ornithine carbamoyltransferase superfamily. ATCase family. In terms of assembly, heterododecamer (2C3:3R2) of six catalytic PyrB chains organized as two trimers (C3), and six regulatory PyrI chains organized as three dimers (R2).

It catalyses the reaction carbamoyl phosphate + L-aspartate = N-carbamoyl-L-aspartate + phosphate + H(+). It functions in the pathway pyrimidine metabolism; UMP biosynthesis via de novo pathway; (S)-dihydroorotate from bicarbonate: step 2/3. Its function is as follows. Catalyzes the condensation of carbamoyl phosphate and aspartate to form carbamoyl aspartate and inorganic phosphate, the committed step in the de novo pyrimidine nucleotide biosynthesis pathway. The protein is Aspartate carbamoyltransferase catalytic subunit of Deinococcus radiodurans (strain ATCC 13939 / DSM 20539 / JCM 16871 / CCUG 27074 / LMG 4051 / NBRC 15346 / NCIMB 9279 / VKM B-1422 / R1).